Here is a 206-residue protein sequence, read N- to C-terminus: Ribosomal RNA small subunit methyltransferase G (206 aa).

S-adenosyl-L-methionine-binding positions include G74, L79, 125–126, and R140; that span reads VE.

This sequence belongs to the methyltransferase superfamily. RNA methyltransferase RsmG family.

The protein localises to the cytoplasm. The catalysed reaction is guanosine(527) in 16S rRNA + S-adenosyl-L-methionine = N(7)-methylguanosine(527) in 16S rRNA + S-adenosyl-L-homocysteine. Its function is as follows. Specifically methylates the N7 position of guanine in position 527 of 16S rRNA. The polypeptide is Ribosomal RNA small subunit methyltransferase G (Shewanella oneidensis (strain ATCC 700550 / JCM 31522 / CIP 106686 / LMG 19005 / NCIMB 14063 / MR-1)).